A 341-amino-acid chain; its full sequence is MPSIRLADLAQQLDAELHGDGDIVITGVASMQSAQTGHITFMVNPKYREHLGLCQASAVVMTQDDLPFAKSAALVVKNPYLTYARMAQILDTTPKPAQNIAPSAVIDETAKLGNNVSIGANAVIESGVELGDNVIIGAGCFVGKNSKIGAGSRLWANVTIYHEIQIGQNCLIQSGTVVGADGFGYANDRGNWVKIPQIGRVIIGDRVEIGACTTIDRGALDDTVIGNGVIIDNQCQIAHNVVIGDNTAVAGGVIMAGSLKIGRYCMIGGASVINGHMEICDKVTVTGMGMVMRPITEPGVYSSGIPLQPNKVWRKTAALVMNIDDMSKRLKSLERKVNQQD.

The active-site Proton acceptor is H239.

The protein belongs to the transferase hexapeptide repeat family. LpxD subfamily. In terms of assembly, homotrimer.

The enzyme catalyses a UDP-3-O-[(3R)-3-hydroxyacyl]-alpha-D-glucosamine + a (3R)-hydroxyacyl-[ACP] = a UDP-2-N,3-O-bis[(3R)-3-hydroxyacyl]-alpha-D-glucosamine + holo-[ACP] + H(+). The catalysed reaction is UDP-3-O-[(3R)-3-hydroxytetradecanoyl]-alpha-D-glucosamine + (3R)-hydroxytetradecanoyl-[ACP] = UDP-2-N,3-O-bis[(3R)-3-hydroxytetradecanoyl]-alpha-D-glucosamine + holo-[ACP] + H(+). The protein operates within glycolipid biosynthesis; lipid IV(A) biosynthesis; lipid IV(A) from (3R)-3-hydroxytetradecanoyl-[acyl-carrier-protein] and UDP-N-acetyl-alpha-D-glucosamine: step 3/6. Catalyzes the N-acylation of UDP-3-O-(hydroxytetradecanoyl)glucosamine using 3-hydroxytetradecanoyl-ACP as the acyl donor. Is involved in the biosynthesis of lipid A, a phosphorylated glycolipid that anchors the lipopolysaccharide to the outer membrane of the cell. This chain is UDP-3-O-(3-hydroxymyristoyl)glucosamine N-acyltransferase, found in Escherichia coli (strain UTI89 / UPEC).